The sequence spans 485 residues: RAC-beta serine/threonine-protein kinase B (485 aa).

A PH domain is found at 5–109 (MVIKEGWLQK…WIIAIQTVAN (105 aa)). O-linked (GlcNAc) serine glycosylation is found at S132 and S135. One can recognise a Protein kinase domain in the interval 156 to 413 (FDYLKLLGKG…AQEVMSHGFF (258 aa)). ATP contacts are provided by residues 162 to 170 (LGKGTFGKV) and K185. The Proton acceptor role is filled by D279. An O-linked (GlcNAc) threonine glycan is attached at T310. The residue at position 313 (T313) is a Phosphothreonine. O-linked (GlcNAc) threonine glycosylation occurs at T317. Residues 414-485 (ASINWQDVTE…QFSYSSSIRE (72 aa)) enclose the AGC-kinase C-terminal domain. The disordered stretch occupies residues 454-485 (LTPPDRYDNLDALESEQRPHFPQFSYSSSIRE). The span at 458 to 472 (DRYDNLDALESEQRP) shows a compositional bias: basic and acidic residues. S478 is modified (phosphoserine). An O-linked (GlcNAc) serine; alternate glycan is attached at S478.

This sequence belongs to the protein kinase superfamily. AGC Ser/Thr protein kinase family. RAC subfamily. Phosphorylation on Thr-313 and Ser-478 is required for full activity. Phosphorylation of the activation loop at Thr-313 by PDPK1/PDK1 is a prerequisite for full activation. Phosphorylation by mTORC2 at Ser-478 in response to growth factors plays a key role in AKT1 activation by facilitating subsequent phosphorylation of the activation loop by PDPK1/PDK1.

The catalysed reaction is L-seryl-[protein] + ATP = O-phospho-L-seryl-[protein] + ADP + H(+). It carries out the reaction L-threonyl-[protein] + ATP = O-phospho-L-threonyl-[protein] + ADP + H(+). Its activity is regulated as follows. Two specific sites, one in the kinase domain (Thr-313) and the other in the C-terminal regulatory region (Ser-478), need to be phosphorylated for its full activation. In terms of biological role, akt2-b is one of several closely related serine/threonine-protein kinases known as the AKT kinase, and which regulate many processes including metabolism, proliferation, cell survival, growth and angiogenesis. This is mediated through serine and/or threonine phosphorylation of a range of downstream substrates. Over 100 substrate candidates have been reported so far, but for most of them, no isoform specificity has been reported. May be involved in the inhibition of ciliogenesis. The sequence is that of RAC-beta serine/threonine-protein kinase B (akt2-b) from Xenopus laevis (African clawed frog).